We begin with the raw amino-acid sequence, 331 residues long: Tryptophan--tRNA ligase (331 aa).

ATP contacts are provided by residues 10–12 (QPS) and 18–19 (GN). The 'HIGH' region signature appears at 11–19 (PSGQLTLGN). Aspartate 133 lines the L-tryptophan pocket. Residues 145 to 147 (GED), valine 184, and 193 to 197 (KMSKS) each bind ATP. Positions 193–197 (KMSKS) match the 'KMSKS' region motif.

The protein belongs to the class-I aminoacyl-tRNA synthetase family. Homodimer.

Its subcellular location is the cytoplasm. The enzyme catalyses tRNA(Trp) + L-tryptophan + ATP = L-tryptophyl-tRNA(Trp) + AMP + diphosphate + H(+). Functionally, catalyzes the attachment of tryptophan to tRNA(Trp). This is Tryptophan--tRNA ligase from Listeria monocytogenes serotype 4b (strain F2365).